The primary structure comprises 143 residues: MFLGTYTPKLDDKGRLTLPAKFREDLAGGLMVTKGQDHSLAVYPKEEFAARARKAAAVSRTNPEARAFIRNLAASADEQRPDGQGRITLSAAHRTYAGLTKECVVIGSVDFLEIWDAQAWAAYQEETEAAFSAAEDDVLGGLL.

SpoVT-AbrB domains are found at residues 5-47 and 76-119; these read TYTP…PKEE and ADEQ…DAQA.

Belongs to the MraZ family. In terms of assembly, forms oligomers.

The protein localises to the cytoplasm. The protein resides in the nucleoid. In Corynebacterium glutamicum (strain R), this protein is Transcriptional regulator MraZ.